The chain runs to 386 residues: Meiotic chromosome segregation protein C1539.02 (386 aa).

3 disordered regions span residues 1–28, 46–85, and 366–386; these read MNQD…SNKS, RALI…SSKQ, and DIHE…KTKG. Polar residues predominate over residues 15–28; the sequence is AETSQLKNFSSNKS.

The protein resides in the nucleus. Required for meiotic chromosome segregation. The sequence is that of Meiotic chromosome segregation protein C1539.02 from Schizosaccharomyces pombe (strain 972 / ATCC 24843) (Fission yeast).